The sequence spans 98 residues: Putative pterin-4-alpha-carbinolamine dehydratase (98 aa).

The protein belongs to the pterin-4-alpha-carbinolamine dehydratase family.

It catalyses the reaction (4aS,6R)-4a-hydroxy-L-erythro-5,6,7,8-tetrahydrobiopterin = (6R)-L-erythro-6,7-dihydrobiopterin + H2O. This is Putative pterin-4-alpha-carbinolamine dehydratase from Jannaschia sp. (strain CCS1).